Reading from the N-terminus, the 296-residue chain is Glycine--tRNA ligase alpha subunit (296 aa).

This sequence belongs to the class-II aminoacyl-tRNA synthetase family. As to quaternary structure, tetramer of two alpha and two beta subunits.

It localises to the cytoplasm. It catalyses the reaction tRNA(Gly) + glycine + ATP = glycyl-tRNA(Gly) + AMP + diphosphate. The protein is Glycine--tRNA ligase alpha subunit of Synechococcus sp. (strain CC9605).